Consider the following 542-residue polypeptide: TNF receptor-associated factor 6 (542 aa).

The interval 1-374 is interaction with TAX1BP1; it reads MSLLHCENSC…EAQQCNGIYI (374 aa). Residues 71–110 form an RING-type; degenerate zinc finger; it reads CPICLMALREAVQTPCGHRFCKACIIKSIRDAGHKCPVDN. K125 participates in a covalent cross-link: Glycyl lysine isopeptide (Lys-Gly) (interchain with G-Cter in SUMO); alternate. A Glycyl lysine isopeptide (Lys-Gly) (interchain with G-Cter in ubiquitin); alternate cross-link involves residue K125. Residue K143 forms a Glycyl lysine isopeptide (Lys-Gly) (interchain with G-Cter in SUMO) linkage. 2 consecutive TRAF-type zinc fingers follow at residues 151–203 and 204–260; these read EHQA…EDKE and IHEQ…NHLA. Residues 310 to 368 are a coiled coil; that stretch reads SEVHNFQETIQQLEGRLVRQDHQIRELTAKMETQSMYVNELKRTIRTLEDKVAEIEAQQ. K339 participates in a covalent cross-link: Glycyl lysine isopeptide (Lys-Gly) (interchain with G-Cter in ubiquitin). Positions 370–519 constitute an MATH domain; it reads NGIYIWKIGN…DDTLLVRCEV (150 aa). The segment at 375-542 is interaction with TANK; that stretch reads WKIGNFGMHL…FQPRSTDSGI (168 aa). K473 is covalently cross-linked (Glycyl lysine isopeptide (Lys-Gly) (interchain with G-Cter in SUMO)).

It belongs to the TNF receptor-associated factor family. A subfamily. In terms of assembly, homotrimer. Homooligomer. N-terminal region is dimeric while C-terminal region is trimeric; maybe providing a mode of oligomerization. Upon IL1B treatment, forms a complex with PELI1, IRAK1, IRAK4 and MYD88; this complex recruits MAP3K7/TAK1, TAB1 and TAB2 to mediate NF-kappa-B activation. Direct binding of SMAD6 to PELI1 prevents the complex formation and hence negatively regulates IL1R-TLR signaling and eventually NF-kappa-B-mediated gene expression. Binds to TNFRSF5/CD40 and TNFRSF11A/RANK. Associates with NGFR, TNFRSF17, IRAK2, IRAK3, RIPK2, MAP3K1, MAP3K5, MAP3K14, CSK, TRAF, TRAF-interacting protein TRIP and TNF receptor associated protein TDP2. Interacts with IL17R. Interacts with SQSTM1 bridging NTRK1 and NGFR. Forms a ternary complex with SQSTM1 and PRKCZ. Interacts with PELI2 and PELI3. Binds UBE2V1. Interacts with TAX1BP1; this interaction mediates deubiquitination of TRAF6 and inhibition of NF-kappa-B activation. Interacts with ZNF675. Interacts with ARRB1 and ARRB2. Interacts with MAP3K7 and TAB1/MAP3K7IP1; during IL-1 signaling. Interacts with UBE2N. Interacts with TGFBR1, HDAC1 and RANGAP1. Interacts with AKT1, AKT2 and AKT3. Interacts (via TRAF domains) with NUMBL (via C-terminal). Interacts with RBCK1. Interacts with LIMD1 (via LIM domains). Interacts with RSAD2/viperin. Interacts (via C-terminus) with EIF2AK2/PKR (via the kinase catalytic domain). Interacts with ZFAND5. Interacts with IL1RL1. Interacts with TRAFD1. Interacts with AJUBA. Interacts with MAVS/IPS1. Interacts (via TRAF domains) with DYNC2I2 (via WD domains). Interacts with IFIT3 (via N-terminus). Interacts with TICAM2. Interacts with CARD14. Interacts with CD40 and MAP3K8; the interaction is required for ERK activation. Interacts with TICAM1 and this interaction is enhanced in the presence of WDFY1. Interacts with TANK; this interaction increases in response to DNA damage. Interacts with USP10; this interaction increases in response to DNA damage. Interacts with ZC3H12A; this interaction increases in response to DNA damage and is stimulated by TANK. Interacts with WDFY3. Interacts with TRIM13. Interacts with GPS2. Interacts (via C-terminus) with SASH1. Interacts with LRRC19. Interacts with IL17RA and TRAF3IP2. Interacts with TOMM70. Interacts with AMBRA1; interaction is required to mediate 'Lys-63'-linked ubiquitination of ULK1. Interacts with CRBN; this interaction inhibits TLR4-mediated signaling by preventing TRAF6-mediated ubiquitination of ECSIT. Post-translationally, sumoylated on Lys-125, Lys-143 and Lys-473 with SUMO1. Polyubiquitinated on Lys-125 by TRAF3IP2; after cell stimulation with IL17A. Polyubiquitinated on Lys-125; after cell stimulation with IL1B or TGFB. This ligand-induced cell stimulation leads to dimerization/oligomerization of TRAF6 molecules, followed by auto-ubiquitination which involves UBE2N and UBE2V1 and leads to TRAF6 activation. This 'Lys-63' site-specific poly-ubiquitination appears to be associated with the activation of signaling molecules. Endogenous autoubiquitination occurs only for the cytoplasmic form. Deubiquitinated by USP10 in a TANK-dependent manner, leading to the negative regulation of NF-kappa-B signaling upon DNA damage. LRRC19 induces 'Lys-63' ubiquitination. Ubiquitinated at Lys-339 by the SCF(FBXL2) complex, leading to its degradation by the proteasome.

Its subcellular location is the cytoplasm. It localises to the cell cortex. It is found in the nucleus. The protein localises to the lipid droplet. The enzyme catalyses S-ubiquitinyl-[E2 ubiquitin-conjugating enzyme]-L-cysteine + [acceptor protein]-L-lysine = [E2 ubiquitin-conjugating enzyme]-L-cysteine + N(6)-ubiquitinyl-[acceptor protein]-L-lysine.. The protein operates within protein modification; protein ubiquitination. Its function is as follows. E3 ubiquitin ligase that, together with UBE2N and UBE2V1, mediates the synthesis of 'Lys-63'-linked-polyubiquitin chains conjugated to proteins, such as ECSIT, IKBKG, IRAK1, AKT1 and AKT2. Also mediates ubiquitination of free/unanchored polyubiquitin chain that leads to MAP3K7 activation. Leads to the activation of NF-kappa-B and JUN. Seems to also play a role in dendritic cells (DCs) maturation and/or activation. Represses c-Myb-mediated transactivation, in B-lymphocytes. Adapter protein that seems to play a role in signal transduction initiated via TNF receptor, IL-1 receptor and IL-17 receptor. Regulates osteoclast differentiation by mediating the activation of adapter protein complex 1 (AP-1) and NF-kappa-B, in response to RANK-L stimulation. Together with MAP3K8, mediates CD40 signals that activate ERK in B-cells and macrophages, and thus may play a role in the regulation of immunoglobulin production. Acts as a regulator of the JNK and NF-kappa-B signaling pathways by initiating assembly of heterotypic 'Lys-63'-/'Lys-48'-linked branched ubiquitin chains that are then recognized by TAB2: TRAF6 catalyzes initial 'Lys-63'-linked-polyubiquitin chains that are then branched via 'Lys-48'-linked polyubiquitin by HUWE1. 'Lys-63'-/'Lys-48'-linked branched ubiquitin chains protect 'Lys-63'-linkages from CYLD deubiquitination. Also participates in the TCR signaling by ubiquitinating LAT. This chain is TNF receptor-associated factor 6 (TRAF6), found in Bos taurus (Bovine).